The sequence spans 250 residues: NH(3)-dependent NAD(+) synthetase (250 aa).

Residue 31-38 (GISGGIDS) participates in ATP binding. Position 37 (aspartate 37) interacts with Mg(2+). Arginine 122 contributes to the deamido-NAD(+) binding site. Position 142 (threonine 142) interacts with ATP. Glutamate 147 contacts Mg(2+). Residues lysine 155 and aspartate 162 each contribute to the deamido-NAD(+) site. Positions 171 and 193 each coordinate ATP. 239–240 (HK) contributes to the deamido-NAD(+) binding site.

This sequence belongs to the NAD synthetase family. As to quaternary structure, homodimer.

It catalyses the reaction deamido-NAD(+) + NH4(+) + ATP = AMP + diphosphate + NAD(+) + H(+). It participates in cofactor biosynthesis; NAD(+) biosynthesis; NAD(+) from deamido-NAD(+) (ammonia route): step 1/1. Catalyzes the ATP-dependent amidation of deamido-NAD to form NAD. Uses ammonia as a nitrogen source. The chain is NH(3)-dependent NAD(+) synthetase from Alkaliphilus oremlandii (strain OhILAs) (Clostridium oremlandii (strain OhILAs)).